The following is a 182-amino-acid chain: Adenine phosphoribosyltransferase (182 aa).

This sequence belongs to the purine/pyrimidine phosphoribosyltransferase family. Homodimer.

Its subcellular location is the cytoplasm. The enzyme catalyses AMP + diphosphate = 5-phospho-alpha-D-ribose 1-diphosphate + adenine. Its pathway is purine metabolism; AMP biosynthesis via salvage pathway; AMP from adenine: step 1/1. Its function is as follows. Catalyzes a salvage reaction resulting in the formation of AMP, that is energically less costly than de novo synthesis. The protein is Adenine phosphoribosyltransferase of Stutzerimonas stutzeri (Pseudomonas stutzeri).